The sequence spans 426 residues: D-tagatose-1,6-bisphosphate aldolase subunit KbaZ (426 aa).

This sequence belongs to the GatZ/KbaZ family. KbaZ subfamily. Forms a complex with KbaY.

Its pathway is carbohydrate metabolism; D-tagatose 6-phosphate degradation; D-glyceraldehyde 3-phosphate and glycerone phosphate from D-tagatose 6-phosphate: step 2/2. In terms of biological role, component of the tagatose-1,6-bisphosphate aldolase KbaYZ that is required for full activity and stability of the Y subunit. Could have a chaperone-like function for the proper and stable folding of KbaY. When expressed alone, KbaZ does not show any aldolase activity. The polypeptide is D-tagatose-1,6-bisphosphate aldolase subunit KbaZ (Escherichia coli O17:K52:H18 (strain UMN026 / ExPEC)).